A 129-amino-acid polypeptide reads, in one-letter code: Glycine cleavage system H protein (129 aa).

The 83-residue stretch at 24 to 106 (TYTVGITEHA…YAGGWIFKIK (83 aa)) folds into the Lipoyl-binding domain. Position 65 is an N6-lipoyllysine (lysine 65).

It belongs to the GcvH family. In terms of assembly, the glycine cleavage system is composed of four proteins: P, T, L and H. It depends on (R)-lipoate as a cofactor.

Its function is as follows. The glycine cleavage system catalyzes the degradation of glycine. The H protein shuttles the methylamine group of glycine from the P protein to the T protein. The sequence is that of Glycine cleavage system H protein from Escherichia coli O45:K1 (strain S88 / ExPEC).